A 355-amino-acid polypeptide reads, in one-letter code: Peptide chain release factor 1 (355 aa).

Residue glutamine 231 is modified to N5-methylglutamine. The disordered stretch occupies residues 283–303 (LAKESEARKSQVGSGDRSERI).

This sequence belongs to the prokaryotic/mitochondrial release factor family. In terms of processing, methylated by PrmC. Methylation increases the termination efficiency of RF1.

The protein localises to the cytoplasm. In terms of biological role, peptide chain release factor 1 directs the termination of translation in response to the peptide chain termination codons UAG and UAA. In Campylobacter lari (strain RM2100 / D67 / ATCC BAA-1060), this protein is Peptide chain release factor 1.